The following is a 211-amino-acid chain: Small ribosomal subunit protein bS6c alpha (211 aa).

Residues 1 to 19 (MATFSLTSTLPSSSPTTSL) are compositionally biased toward low complexity. Disordered stretches follow at residues 1–25 (MATFSLTSTLPSSSPTTSLHSIPKP) and 80–100 (DEDPPSTPPAGLAVEEKPEPQ). A chloroplast-targeting transit peptide spans 1 to 65 (MATFSLTSTL…YGPYVKAIAL (65 aa)).

It belongs to the bacterial ribosomal protein bS6 family. Component of the chloroplast small ribosomal subunit (SSU). Mature 70S chloroplast ribosomes of higher plants consist of a small (30S) and a large (50S) subunit. The 30S small subunit contains 1 molecule of ribosomal RNA (16S rRNA) and 24 different proteins. The 50S large subunit contains 3 rRNA molecules (23S, 5S and 4.5S rRNA) and 33 different proteins.

It is found in the plastid. It localises to the chloroplast. Its function is as follows. Component of the chloroplast ribosome (chloro-ribosome), a dedicated translation machinery responsible for the synthesis of chloroplast genome-encoded proteins, including proteins of the transcription and translation machinery and components of the photosynthetic apparatus. The sequence is that of Small ribosomal subunit protein bS6c alpha (RPS6) from Spinacia oleracea (Spinach).